The chain runs to 148 residues: UPF0178 protein Pcar_2632 (148 aa).

The protein belongs to the UPF0178 family.

This chain is UPF0178 protein Pcar_2632, found in Syntrophotalea carbinolica (strain DSM 2380 / NBRC 103641 / GraBd1) (Pelobacter carbinolicus).